Reading from the N-terminus, the 161-residue chain is Large ribosomal subunit protein uL10 (161 aa).

It belongs to the universal ribosomal protein uL10 family. As to quaternary structure, part of the ribosomal stalk of the 50S ribosomal subunit. The N-terminus interacts with L11 and the large rRNA to form the base of the stalk. The C-terminus forms an elongated spine to which L12 dimers bind in a sequential fashion forming a multimeric L10(L12)X complex.

Its function is as follows. Forms part of the ribosomal stalk, playing a central role in the interaction of the ribosome with GTP-bound translation factors. This is Large ribosomal subunit protein uL10 from Buchnera aphidicola subsp. Cinara cedri (strain Cc).